The primary structure comprises 355 residues: D-alanine--D-alanine ligase (355 aa).

The ATP-grasp domain maps to 143-350; that stretch reads KKIFSHLEIP…IDQLVAKLVD (208 aa). 178-233 lines the ATP pocket; sequence IEKLKLPVFVKPANSGSSLGISKAKTRSEIIKALQKAWEIDSRIVIEEGLDVRELE. Positions 303, 317, and 319 each coordinate Mg(2+).

It belongs to the D-alanine--D-alanine ligase family. It depends on Mg(2+) as a cofactor. Mn(2+) serves as cofactor.

It is found in the cytoplasm. The enzyme catalyses 2 D-alanine + ATP = D-alanyl-D-alanine + ADP + phosphate + H(+). Its pathway is cell wall biogenesis; peptidoglycan biosynthesis. Its function is as follows. Cell wall formation. In Prochlorococcus marinus subsp. pastoris (strain CCMP1986 / NIES-2087 / MED4), this protein is D-alanine--D-alanine ligase.